The primary structure comprises 100 residues: Gas vesicle protein J (100 aa).

This sequence belongs to the gas vesicle GvpA family. As to quaternary structure, interacts with GvpA.

It localises to the gas vesicle. Its function is as follows. A minor component of the gas vesicle, might be involved in nucleating gas vesicle formation. This protein could be important for the shape determination of the gas vesicle. Gas vesicles (GV) are hollow, gas filled proteinaceous nanostructures. During planktonic growth they allow positioning of the organism at a favorable depth for light or nutrient acquisition. When a minimal gvp locus (gvpA2-gvpR-gvpN-gvpF-gvpG-gvpL-gvpS-gvpK-gvpJ-gvpT-gvpU, called pNL29) is expressed in E.coli gas vesicles are made. This chain is Gas vesicle protein J, found in Priestia megaterium (Bacillus megaterium).